A 348-amino-acid polypeptide reads, in one-letter code: Phenylalanine--tRNA ligase alpha subunit (348 aa).

Residue E269 coordinates Mg(2+).

The protein belongs to the class-II aminoacyl-tRNA synthetase family. Phe-tRNA synthetase alpha subunit type 1 subfamily. Tetramer of two alpha and two beta subunits. Mg(2+) serves as cofactor.

It is found in the cytoplasm. It catalyses the reaction tRNA(Phe) + L-phenylalanine + ATP = L-phenylalanyl-tRNA(Phe) + AMP + diphosphate + H(+). The polypeptide is Phenylalanine--tRNA ligase alpha subunit (Dechloromonas aromatica (strain RCB)).